Here is a 207-residue protein sequence, read N- to C-terminus: dITP/XTP pyrophosphatase (207 aa).

7–12 (SNNAKK) contacts substrate. Residue Asp72 is the Proton acceptor of the active site. Asp72 is a Mg(2+) binding site. Substrate is bound by residues Ser73, 155–158 (FGYD), Lys183, and 188–189 (HR).

It belongs to the HAM1 NTPase family. In terms of assembly, homodimer. The cofactor is Mg(2+).

The enzyme catalyses XTP + H2O = XMP + diphosphate + H(+). It carries out the reaction dITP + H2O = dIMP + diphosphate + H(+). The catalysed reaction is ITP + H2O = IMP + diphosphate + H(+). Pyrophosphatase that catalyzes the hydrolysis of nucleoside triphosphates to their monophosphate derivatives, with a high preference for the non-canonical purine nucleotides XTP (xanthosine triphosphate), dITP (deoxyinosine triphosphate) and ITP. Seems to function as a house-cleaning enzyme that removes non-canonical purine nucleotides from the nucleotide pool, thus preventing their incorporation into DNA/RNA and avoiding chromosomal lesions. This chain is dITP/XTP pyrophosphatase, found in Corynebacterium diphtheriae (strain ATCC 700971 / NCTC 13129 / Biotype gravis).